A 481-amino-acid polypeptide reads, in one-letter code: Glutamyl-tRNA(Gln) amidotransferase subunit A (481 aa).

Residues K77 and S151 each act as charge relay system in the active site. The Acyl-ester intermediate role is filled by S175.

This sequence belongs to the amidase family. GatA subfamily. Heterotrimer of A, B and C subunits.

The catalysed reaction is L-glutamyl-tRNA(Gln) + L-glutamine + ATP + H2O = L-glutaminyl-tRNA(Gln) + L-glutamate + ADP + phosphate + H(+). Allows the formation of correctly charged Gln-tRNA(Gln) through the transamidation of misacylated Glu-tRNA(Gln) in organisms which lack glutaminyl-tRNA synthetase. The reaction takes place in the presence of glutamine and ATP through an activated gamma-phospho-Glu-tRNA(Gln). The sequence is that of Glutamyl-tRNA(Gln) amidotransferase subunit A from Rubrobacter xylanophilus (strain DSM 9941 / JCM 11954 / NBRC 16129 / PRD-1).